The chain runs to 378 residues: Queuine tRNA-ribosyltransferase (378 aa).

D89 functions as the Proton acceptor in the catalytic mechanism. Residues 89 to 93 (DSGGF), D143, Q194, and G221 contribute to the substrate site. The RNA binding stretch occupies residues 252-258 (GVGTPAN). Residue D271 is the Nucleophile of the active site. Zn(2+) is bound by residues C309, C311, C314, and H340.

The protein belongs to the queuine tRNA-ribosyltransferase family. As to quaternary structure, homodimer. Within each dimer, one monomer is responsible for RNA recognition and catalysis, while the other monomer binds to the replacement base PreQ1. The cofactor is Zn(2+).

The catalysed reaction is 7-aminomethyl-7-carbaguanine + guanosine(34) in tRNA = 7-aminomethyl-7-carbaguanosine(34) in tRNA + guanine. Its pathway is tRNA modification; tRNA-queuosine biosynthesis. Catalyzes the base-exchange of a guanine (G) residue with the queuine precursor 7-aminomethyl-7-deazaguanine (PreQ1) at position 34 (anticodon wobble position) in tRNAs with GU(N) anticodons (tRNA-Asp, -Asn, -His and -Tyr). Catalysis occurs through a double-displacement mechanism. The nucleophile active site attacks the C1' of nucleotide 34 to detach the guanine base from the RNA, forming a covalent enzyme-RNA intermediate. The proton acceptor active site deprotonates the incoming PreQ1, allowing a nucleophilic attack on the C1' of the ribose to form the product. After dissociation, two additional enzymatic reactions on the tRNA convert PreQ1 to queuine (Q), resulting in the hypermodified nucleoside queuosine (7-(((4,5-cis-dihydroxy-2-cyclopenten-1-yl)amino)methyl)-7-deazaguanosine). This chain is Queuine tRNA-ribosyltransferase, found in Lachnospira eligens (strain ATCC 27750 / DSM 3376 / VPI C15-48 / C15-B4) (Eubacterium eligens).